The sequence spans 561 residues: Arginine--tRNA ligase (561 aa).

Positions 129–139 (ANPTGPLHVGH) match the 'HIGH' region motif.

This sequence belongs to the class-I aminoacyl-tRNA synthetase family. As to quaternary structure, monomer.

The protein localises to the cytoplasm. It carries out the reaction tRNA(Arg) + L-arginine + ATP = L-arginyl-tRNA(Arg) + AMP + diphosphate. The protein is Arginine--tRNA ligase of Polaromonas sp. (strain JS666 / ATCC BAA-500).